The sequence spans 53 residues: MFRWGIIFLVIALIAAALGFGGLAGTAAGAAKIVFVVGIILFLVSLFMGRRRP.

Helical transmembrane passes span 4 to 24 (WGIIFLVIALIAAALGFGGLA) and 28 to 48 (AGAAKIVFVVGIILFLVSLFM).

It belongs to the UPF0391 family.

It localises to the cell membrane. In Cronobacter sakazakii (strain ATCC BAA-894) (Enterobacter sakazakii), this protein is UPF0391 membrane protein ESA_03375.